The chain runs to 449 residues: Tubulin alpha-1 chain (449 aa).

Residues Q11, E71, S140, G144, T145, T179, N206, and N228 each contribute to the GTP site. E71 provides a ligand contact to Mg(2+). Residue E254 is part of the active site.

This sequence belongs to the tubulin family. In terms of assembly, dimer of alpha and beta chains. A typical microtubule is a hollow water-filled tube with an outer diameter of 25 nm and an inner diameter of 15 nM. Alpha-beta heterodimers associate head-to-tail to form protofilaments running lengthwise along the microtubule wall with the beta-tubulin subunit facing the microtubule plus end conferring a structural polarity. Microtubules usually have 13 protofilaments but different protofilament numbers can be found in some organisms and specialized cells. The cofactor is Mg(2+).

It is found in the cytoplasm. The protein resides in the cytoskeleton. It catalyses the reaction GTP + H2O = GDP + phosphate + H(+). Functionally, tubulin is the major constituent of microtubules, a cylinder consisting of laterally associated linear protofilaments composed of alpha- and beta-tubulin heterodimers. Microtubules grow by the addition of GTP-tubulin dimers to the microtubule end, where a stabilizing cap forms. Below the cap, tubulin dimers are in GDP-bound state, owing to GTPase activity of alpha-tubulin. The protein is Tubulin alpha-1 chain (tubA) of Emericella nidulans (strain FGSC A4 / ATCC 38163 / CBS 112.46 / NRRL 194 / M139) (Aspergillus nidulans).